A 327-amino-acid polypeptide reads, in one-letter code: E3 ubiquitin ligase RNF121 (327 aa).

Ala2 is modified (N-acetylalanine). Transmembrane regions (helical) follow at residues Met50–Val70, Ser79–Leu99, His100–Phe120, Ala148–Phe168, and Pro172–Leu192. The RING-type; atypical zinc finger occupies Cys226–Lys276. A helical membrane pass occupies residues Leu306 to Leu326.

This sequence belongs to the RNF121 family.

Its subcellular location is the endoplasmic reticulum membrane. It catalyses the reaction S-ubiquitinyl-[E2 ubiquitin-conjugating enzyme]-L-cysteine + [acceptor protein]-L-lysine = [E2 ubiquitin-conjugating enzyme]-L-cysteine + N(6)-ubiquitinyl-[acceptor protein]-L-lysine.. It participates in protein modification; protein ubiquitination. Functionally, E3 ubiquitin ligase which accepts ubiquitin and transfers it to substrates thereby promoting their degradation by the endoplasmic reticulum-associated degradation (ERAD) pathway which is a pathway involved in ubiquitin-dependent degradation of misfolded endoplasmic reticulum proteins. May regulate the unfolded protein response to reduce endoplasmic reticulum stress. The chain is E3 ubiquitin ligase RNF121 (RNF121) from Homo sapiens (Human).